A 180-amino-acid chain; its full sequence is Large ribosomal subunit protein uL5 (180 aa).

This sequence belongs to the universal ribosomal protein uL5 family. As to quaternary structure, part of the 50S ribosomal subunit; part of the 5S rRNA/L5/L18/L25 subcomplex. Contacts the 5S rRNA and the P site tRNA. Forms a bridge to the 30S subunit in the 70S ribosome.

In terms of biological role, this is one of the proteins that bind and probably mediate the attachment of the 5S RNA into the large ribosomal subunit, where it forms part of the central protuberance. In the 70S ribosome it contacts protein S13 of the 30S subunit (bridge B1b), connecting the 2 subunits; this bridge is implicated in subunit movement. Contacts the P site tRNA; the 5S rRNA and some of its associated proteins might help stabilize positioning of ribosome-bound tRNAs. This is Large ribosomal subunit protein uL5 from Chlamydia felis (strain Fe/C-56) (Chlamydophila felis).